The primary structure comprises 175 residues: Lipopolysaccharide export system protein LptH (175 aa).

Positions 1-24 are cleaved as a signal peptide; sequence MRFVNTLPLIFGLTAALGSSMALA.

This sequence belongs to the LptA family. As to quaternary structure, component of the lipopolysaccharide transport and assembly complex. Mainly exists as a dimer in solution. Tends to oligomerize already in solution. The protomers follow one another in a head-to-tail fashion throughout the crystal lattice, yielding a continuous fiber arrangement.

The protein localises to the periplasm. In terms of biological role, involved in the assembly of lipopolysaccharide (LPS). Required for the translocation of LPS from the inner membrane to the outer membrane. May form a bridge between the inner membrane and the outer membrane, via interactions with LptC and LptD, thereby facilitating LPS transfer across the periplasm. Binds LPS. Important for cell envelope stability and essential for growth, cell viability and ability to cause infection in different animal models. This Pseudomonas aeruginosa (strain ATCC 15692 / DSM 22644 / CIP 104116 / JCM 14847 / LMG 12228 / 1C / PRS 101 / PAO1) protein is Lipopolysaccharide export system protein LptH.